Reading from the N-terminus, the 78-residue chain is Large ribosomal subunit protein bL28 (78 aa).

Positions 1 to 24 (MSKVCQVTGKRPASGNNVSHAHNK) are disordered.

The protein belongs to the bacterial ribosomal protein bL28 family.

In Nitrosococcus oceani (strain ATCC 19707 / BCRC 17464 / JCM 30415 / NCIMB 11848 / C-107), this protein is Large ribosomal subunit protein bL28.